We begin with the raw amino-acid sequence, 137 residues long: Large ribosomal subunit protein uL16 (137 aa).

The protein belongs to the universal ribosomal protein uL16 family. In terms of assembly, part of the 50S ribosomal subunit.

Binds 23S rRNA and is also seen to make contacts with the A and possibly P site tRNAs. This chain is Large ribosomal subunit protein uL16, found in Afipia carboxidovorans (strain ATCC 49405 / DSM 1227 / KCTC 32145 / OM5) (Oligotropha carboxidovorans).